The primary structure comprises 201 residues: Protein MJ0810 (201 aa).

The region spanning 7–197 (EEGTFAVRYA…EVEPRGEVIE (191 aa)) is the AMMECR1 domain.

The chain is Protein MJ0810 from Methanocaldococcus jannaschii (strain ATCC 43067 / DSM 2661 / JAL-1 / JCM 10045 / NBRC 100440) (Methanococcus jannaschii).